We begin with the raw amino-acid sequence, 318 residues long: Ribonuclease Z (318 aa).

Zn(2+) contacts are provided by histidine 62, histidine 64, aspartate 66, histidine 67, histidine 144, aspartate 215, and histidine 273. Aspartate 66 serves as the catalytic Proton acceptor.

The protein belongs to the RNase Z family. As to quaternary structure, homodimer. Zn(2+) serves as cofactor.

It carries out the reaction Endonucleolytic cleavage of RNA, removing extra 3' nucleotides from tRNA precursor, generating 3' termini of tRNAs. A 3'-hydroxy group is left at the tRNA terminus and a 5'-phosphoryl group is left at the trailer molecule.. Its function is as follows. Zinc phosphodiesterase, which displays some tRNA 3'-processing endonuclease activity. Probably involved in tRNA maturation, by removing a 3'-trailer from precursor tRNA. The sequence is that of Ribonuclease Z from Prochlorococcus marinus (strain MIT 9313).